The sequence spans 108 residues: Nucleoid-associated protein BH02310 (108 aa).

It belongs to the YbaB/EbfC family. In terms of assembly, homodimer.

The protein resides in the cytoplasm. The protein localises to the nucleoid. In terms of biological role, binds to DNA and alters its conformation. May be involved in regulation of gene expression, nucleoid organization and DNA protection. This is Nucleoid-associated protein BH02310 from Bartonella henselae (strain ATCC 49882 / DSM 28221 / CCUG 30454 / Houston 1) (Rochalimaea henselae).